Consider the following 607-residue polypeptide: Bifunctional endo-1,4-beta-xylanase A (607 aa).

Residues 1 to 18 (MRTIKFFFAVAIATVAKA) form the signal peptide. One can recognise a GH11 1 domain in the interval 35-242 (NGQTQHKGVA…SSGIADVTKL (208 aa)). The Nucleophile role is filled by E141. E223 functions as the Proton donor in the catalytic mechanism. Residues 248-272 (QKGSNPAPTSTGTVPSSSAGGSTAN) are compositionally biased toward polar residues. Residues 248 to 284 (QKGSNPAPTSTGTVPSSSAGGSTANGKKFTVGNGQNQ) are disordered. One can recognise a GH11 2 domain in the interval 280–487 (NGQNQHKGVN…SSGVADVTLL (208 aa)). E386 serves as the catalytic Nucleophile. Residue E474 is the Proton donor of the active site. The disordered stretch occupies residues 493-514 (PKGSSPATSAAPRTTTRTTTRT). Low complexity predominate over residues 496–514 (SSPATSAAPRTTTRTTTRT). CBM10 domains are found at residues 523 to 563 (KCSA…CGCG) and 566 to 606 (QCSS…CGCG).

Belongs to the glycosyl hydrolase 11 (cellulase G) family.

It carries out the reaction Endohydrolysis of (1-&gt;4)-beta-D-xylosidic linkages in xylans.. It functions in the pathway glycan degradation; xylan degradation. Its function is as follows. Hydrolyzes xylans into xylobiose and xylose. This Neocallimastix patriciarum (Rumen fungus) protein is Bifunctional endo-1,4-beta-xylanase A (XYNA).